Reading from the N-terminus, the 677-residue chain is Bargin (677 aa).

Composition is skewed to low complexity over residues Met1 to Val13 and Ala29 to Gln39. 2 disordered regions span residues Met1–Gln39 and Ser168–Thr190. A BAR domain is found at Glu25–Ser270. Residues Ser183, Ser270, and Ser272 each carry the phosphoserine modification. The Rho-GAP domain occupies Val284–Phe477. The interval Ser504–Leu577 is disordered. The span at Ala516–Ala530 shows a compositional bias: pro residues. Residues Ser552 and Ser558 each carry the phosphoserine modification. Residues Thr574–Asp677 are mediates non-covalent binding of poly-ubiquitin chains.

Expressed in brain (at protein level).

The protein resides in the cell membrane. Its subcellular location is the cytoplasm. The protein localises to the cytosol. Functionally, GTPase activating protein (GAP) which specifically converts GTP-bound RAC1 and CDC42 in their inactive GDP-bound form. The GAP activity is enhanced by the non-covalent binding of K-29 and K-48 polyubiquitin chains. This chain is Bargin, found in Homo sapiens (Human).